The chain runs to 507 residues: ATP synthase subunit alpha (507 aa).

169–176 (GDRQTGKT) contributes to the ATP binding site.

This sequence belongs to the ATPase alpha/beta chains family. F-type ATPases have 2 components, CF(1) - the catalytic core - and CF(0) - the membrane proton channel. CF(1) has five subunits: alpha(3), beta(3), gamma(1), delta(1), epsilon(1). CF(0) has three main subunits: a(1), b(2) and c(9-12). The alpha and beta chains form an alternating ring which encloses part of the gamma chain. CF(1) is attached to CF(0) by a central stalk formed by the gamma and epsilon chains, while a peripheral stalk is formed by the delta and b chains.

The protein localises to the cell inner membrane. The catalysed reaction is ATP + H2O + 4 H(+)(in) = ADP + phosphate + 5 H(+)(out). Functionally, produces ATP from ADP in the presence of a proton gradient across the membrane. The alpha chain is a regulatory subunit. The protein is ATP synthase subunit alpha of Magnetococcus marinus (strain ATCC BAA-1437 / JCM 17883 / MC-1).